Here is a 331-residue protein sequence, read N- to C-terminus: Aldo-keto reductase family 7 member A3 (331 aa).

A Phosphoserine modification is found at serine 6. Methionine 17, aspartate 44, and tyrosine 49 together coordinate NADPH. The active-site Proton donor is the tyrosine 49. Phosphoserine is present on serine 85. Positions 113, 143, 144, 198, 200, 202, 208, 209, and 222 each coordinate NADPH. Residue threonine 227 is modified to Phosphothreonine. Serine 290, glutamine 294, and asparagine 298 together coordinate NADPH.

Belongs to the aldo/keto reductase family. Aldo/keto reductase 2 subfamily. In terms of assembly, homodimer. Expressed in colon, kidney, liver, pancreas, adenocarcinoma and endometrium.

The protein localises to the cytoplasm. It carries out the reaction a primary alcohol + NADP(+) = an aldehyde + NADPH + H(+). The catalysed reaction is aflatoxin B1 dialdehyde + NADPH + H(+) = aflatoxin B1 C(6a)-monoaldehyde + NADP(+). It catalyses the reaction aflatoxin B1 dialdehyde + NADPH + H(+) = aflatoxin B1 C(8)-monoaldehyde + NADP(+). The enzyme catalyses aflatoxin B1 C(6a)-monoaldehyde + NADPH + 2 H(+) = aflatoxin B1 triol + NADP(+). Its activity is regulated as follows. Inhibited by citrate. Catalyzes the NADPH-dependent reduction of various carbonyl-containing compounds, including aldehydes, ketones, and toxic products from cellular metabolism or environmental exposure. Can reduce the dialdehyde form of aflatoxin B1 (AFB1) into alcohol derivatives, via monoaldehydes intermediates. Can reduce the dialdehyde form of aflatoxin B1 (AFB1) into alcohol derivatives, via monoaldehydes intermediates, thus preventing the formation of protein adducts that contribute to AFB1-induced toxicity. The sequence is that of Aldo-keto reductase family 7 member A3 from Homo sapiens (Human).